The primary structure comprises 211 residues: ATP-dependent Clp protease proteolytic subunit 2 (211 aa).

The active-site Nucleophile is the Ser106. The active site involves His131.

It belongs to the peptidase S14 family. As to quaternary structure, fourteen ClpP subunits assemble into 2 heptameric rings which stack back to back to give a disk-like structure with a central cavity, resembling the structure of eukaryotic proteasomes.

The protein resides in the cytoplasm. It catalyses the reaction Hydrolysis of proteins to small peptides in the presence of ATP and magnesium. alpha-casein is the usual test substrate. In the absence of ATP, only oligopeptides shorter than five residues are hydrolyzed (such as succinyl-Leu-Tyr-|-NHMec, and Leu-Tyr-Leu-|-Tyr-Trp, in which cleavage of the -Tyr-|-Leu- and -Tyr-|-Trp bonds also occurs).. Its function is as follows. Cleaves peptides in various proteins in a process that requires ATP hydrolysis. Has a chymotrypsin-like activity. Plays a major role in the degradation of misfolded proteins. The sequence is that of ATP-dependent Clp protease proteolytic subunit 2 from Bradyrhizobium diazoefficiens (strain JCM 10833 / BCRC 13528 / IAM 13628 / NBRC 14792 / USDA 110).